A 273-amino-acid chain; its full sequence is Octanoyltransferase LipM (273 aa).

Residues 33 to 244 (GKTPPTLRFY…AFTRLYAVEF (212 aa)) enclose the BPL/LPL catalytic domain. C146 serves as the catalytic Acyl-thioester intermediate.

Belongs to the octanoyltransferase LipM family. In terms of assembly, monomer.

The catalysed reaction is octanoyl-[ACP] + L-lysyl-[protein] = N(6)-octanoyl-L-lysyl-[protein] + holo-[ACP] + H(+). It functions in the pathway protein modification; protein lipoylation via endogenous pathway; protein N(6)-(lipoyl)lysine from octanoyl-[acyl-carrier-protein]. Its function is as follows. Catalyzes the transfer of endogenously produced octanoic acid from octanoyl-acyl-carrier-protein onto the lipoyl domain of GcvH, an intermediate carrier during protein lipoylation. In Moorella thermoacetica (strain ATCC 39073 / JCM 9320), this protein is Octanoyltransferase LipM.